The sequence spans 926 residues: Alpha-aminoadipic semialdehyde synthase, mitochondrial (926 aa).

The N-terminal 27 residues, Met-1–Ala-27, are a transit peptide targeting the mitochondrion. The segment at Val-28 to Ser-476 is lysine-ketoglutarate reductase. N6-acetyllysine occurs at positions 48 and 56. Position 93 is an N6-acetyllysine; alternate (Lys-93). An N6-succinyllysine; alternate modification is found at Lys-93. Lys-128 is subject to N6-acetyllysine. Lys-138 bears the N6-acetyllysine; alternate mark. Position 138 is an N6-succinyllysine; alternate (Lys-138). N6-succinyllysine is present on Lys-274. Lys-286 is modified (N6-acetyllysine; alternate). Lys-286 carries the post-translational modification N6-succinyllysine; alternate. Lys-333 carries the N6-succinyllysine modification. Residue Lys-458 is modified to N6-acetyllysine; alternate. The residue at position 458 (Lys-458) is an N6-succinyllysine; alternate. The tract at residues Met-477–Pro-926 is saccharopine dehydrogenase. Residues Ser-488, Asp-512, and Gln-516 each contribute to the NAD(+) site. Lys-523 is subject to N6-acetyllysine; alternate. Lys-523 carries the post-translational modification N6-succinyllysine; alternate. NAD(+) is bound at residue Ile-533. An N6-acetyllysine; alternate modification is found at Lys-535. Lys-535 carries the N6-succinyllysine; alternate modification. NAD(+) contacts are provided by Leu-554, Ala-576, and Ser-577. Position 577–578 (Ser-577–Tyr-578) interacts with L-saccharopine. N6-acetyllysine; alternate is present on Lys-584. The residue at position 584 (Lys-584) is an N6-succinyllysine; alternate. Residues Leu-603, Asp-604, and Pro-605 each coordinate NAD(+). Asp-604 provides a ligand contact to L-saccharopine. Arg-703 serves as a coordination point for L-saccharopine. Position 707 is an N6-acetyllysine (Lys-707). Thr-724–Arg-726 contacts L-saccharopine. Lys-732 bears the N6-succinyllysine mark. Lys-739 is modified (N6-acetyllysine). Residue Lys-761 is modified to N6-acetyllysine; alternate. Position 761 is an N6-succinyllysine; alternate (Lys-761). Position 780 is an N6-acetyllysine (Lys-780).

The protein in the N-terminal section; belongs to the AlaDH/PNT family. It in the C-terminal section; belongs to the saccharopine dehydrogenase family. As to quaternary structure, homotetramer. In terms of tissue distribution, expressed in all 16 tissues examined with highest expression in the liver.

The protein resides in the mitochondrion. It catalyses the reaction L-saccharopine + NADP(+) + H2O = L-lysine + 2-oxoglutarate + NADPH + H(+). The catalysed reaction is L-saccharopine + NAD(+) + H2O = (S)-2-amino-6-oxohexanoate + L-glutamate + NADH + H(+). It functions in the pathway amino-acid degradation; L-lysine degradation via saccharopine pathway; glutaryl-CoA from L-lysine: step 1/6. It participates in amino-acid degradation; L-lysine degradation via saccharopine pathway; glutaryl-CoA from L-lysine: step 2/6. Its function is as follows. Bifunctional enzyme that catalyzes the first two steps in lysine degradation. The sequence is that of Alpha-aminoadipic semialdehyde synthase, mitochondrial from Homo sapiens (Human).